We begin with the raw amino-acid sequence, 249 residues long: DNA polymerase sliding clamp 1 (249 aa).

Belongs to the PCNA family. Homotrimer. The subunits circularize to form a toroid; DNA passes through its center. Replication factor C (RFC) is required to load the toroid on the DNA.

Functionally, sliding clamp subunit that acts as a moving platform for DNA processing. Responsible for tethering the catalytic subunit of DNA polymerase and other proteins to DNA during high-speed replication. This Pyrobaculum aerophilum (strain ATCC 51768 / DSM 7523 / JCM 9630 / CIP 104966 / NBRC 100827 / IM2) protein is DNA polymerase sliding clamp 1.